Here is a 175-residue protein sequence, read N- to C-terminus: Small ribosomal subunit protein uS5 (175 aa).

Positions 1–21 are disordered; that stretch reads MAKPERNKKPQQAEERDDGMR. The S5 DRBM domain maps to 20-83; the sequence is MREKMVAVNR…EEARRKMAKV (64 aa).

It belongs to the universal ribosomal protein uS5 family. Part of the 30S ribosomal subunit. Contacts proteins S4 and S8.

Functionally, with S4 and S12 plays an important role in translational accuracy. Its function is as follows. Located at the back of the 30S subunit body where it stabilizes the conformation of the head with respect to the body. This Dechloromonas aromatica (strain RCB) protein is Small ribosomal subunit protein uS5.